Here is a 336-residue protein sequence, read N- to C-terminus: Pyridoxal 5'-phosphate synthase subunit PdxS (336 aa).

Asp-30 is a D-ribose 5-phosphate binding site. The active-site Schiff-base intermediate with D-ribose 5-phosphate is Lys-87. Gly-159 contacts D-ribose 5-phosphate. Residue Arg-171 coordinates D-glyceraldehyde 3-phosphate. D-ribose 5-phosphate-binding positions include Gly-257 and 278–279; that span reads GS.

It belongs to the PdxS/SNZ family. In terms of assembly, in the presence of PdxT, forms a dodecamer of heterodimers.

It catalyses the reaction aldehydo-D-ribose 5-phosphate + D-glyceraldehyde 3-phosphate + L-glutamine = pyridoxal 5'-phosphate + L-glutamate + phosphate + 3 H2O + H(+). It functions in the pathway cofactor biosynthesis; pyridoxal 5'-phosphate biosynthesis. Catalyzes the formation of pyridoxal 5'-phosphate from ribose 5-phosphate (RBP), glyceraldehyde 3-phosphate (G3P) and ammonia. The ammonia is provided by the PdxT subunit. Can also use ribulose 5-phosphate and dihydroxyacetone phosphate as substrates, resulting from enzyme-catalyzed isomerization of RBP and G3P, respectively. The sequence is that of Pyridoxal 5'-phosphate synthase subunit PdxS from Thermoplasma volcanium (strain ATCC 51530 / DSM 4299 / JCM 9571 / NBRC 15438 / GSS1).